The chain runs to 538 residues: T-complex protein 1 subunit epsilon (538 aa).

This sequence belongs to the TCP-1 chaperonin family. In terms of assembly, heterooligomeric complex of about 850 to 900 kDa that forms two stacked rings, 12 to 16 nm in diameter.

The protein resides in the cytoplasm. Functionally, molecular chaperone; assists the folding of proteins upon ATP hydrolysis. Known to play a role, in vitro, in the folding of actin and tubulin. This chain is T-complex protein 1 subunit epsilon (cct5), found in Dictyostelium discoideum (Social amoeba).